The primary structure comprises 492 residues: ATP synthase subunit beta, chloroplastic (492 aa).

170–177 (GGAGVGKT) contributes to the ATP binding site.

It belongs to the ATPase alpha/beta chains family. F-type ATPases have 2 components, CF(1) - the catalytic core - and CF(0) - the membrane proton channel. CF(1) has five subunits: alpha(3), beta(3), gamma(1), delta(1), epsilon(1). CF(0) has four main subunits: a(1), b(1), b'(1) and c(9-12).

The protein localises to the plastid. It localises to the chloroplast thylakoid membrane. It catalyses the reaction ATP + H2O + 4 H(+)(in) = ADP + phosphate + 5 H(+)(out). Produces ATP from ADP in the presence of a proton gradient across the membrane. The catalytic sites are hosted primarily by the beta subunits. This chain is ATP synthase subunit beta, chloroplastic, found in Pinus thunbergii (Japanese black pine).